The primary structure comprises 223 residues: Ribose-5-phosphate isomerase A (223 aa).

Residues 32–35, 85–88, and 98–101 contribute to the substrate site; these read TGST, DGAD, and KGGG. The Proton acceptor role is filled by Glu107. Substrate is bound at residue Lys125.

The protein belongs to the ribose 5-phosphate isomerase family. Homodimer.

The enzyme catalyses aldehydo-D-ribose 5-phosphate = D-ribulose 5-phosphate. The protein operates within carbohydrate degradation; pentose phosphate pathway; D-ribose 5-phosphate from D-ribulose 5-phosphate (non-oxidative stage): step 1/1. Its function is as follows. Catalyzes the reversible conversion of ribose-5-phosphate to ribulose 5-phosphate. The protein is Ribose-5-phosphate isomerase A of Pseudomonas savastanoi pv. phaseolicola (strain 1448A / Race 6) (Pseudomonas syringae pv. phaseolicola (strain 1448A / Race 6)).